Consider the following 64-residue polypeptide: Prokaryotic ubiquitin-like protein Pup (64 aa).

Composition is skewed to basic and acidic residues over residues 1–11 (MAQEQTKRTGG) and 25–34 (GQERREKLAE). Positions 1-38 (MAQEQTKRTGGGDEDEGSAGPEAAGQERREKLAEDTDD) are disordered. The ARC ATPase binding stretch occupies residues 21–58 (PEAAGQERREKLAEDTDDLLDEIDDVLEENAEDFVRAY). Residues 24–52 (AGQERREKLAEDTDDLLDEIDDVLEENAE) adopt a coiled-coil conformation. Q64 is modified (deamidated glutamine). Q64 participates in a covalent cross-link: Isoglutamyl lysine isopeptide (Gln-Lys) (interchain with K-? in acceptor proteins).

The protein belongs to the prokaryotic ubiquitin-like protein family. Strongly interacts with the proteasome-associated ATPase ARC through a hydrophobic interface; the interacting region of Pup lies in its C-terminal half. There is one Pup binding site per ARC hexamer ring. In terms of processing, is modified by deamidation of its C-terminal glutamine to glutamate by the deamidase Dop, a prerequisite to the subsequent pupylation process.

It functions in the pathway protein degradation; proteasomal Pup-dependent pathway. In terms of biological role, protein modifier that is covalently attached to lysine residues of substrate proteins, thereby targeting them for proteasomal degradation. The tagging system is termed pupylation. In Nocardia farcinica (strain IFM 10152), this protein is Prokaryotic ubiquitin-like protein Pup.